The sequence spans 286 residues: MNLKQKWDVYSRLTRLDRPIGTLLLMWPCLMALMLAAGGMPDLKVLIIFIIGVVIMRACGCIINDYADRDLDSFVERTKSRPLASGEISTKEALILFVVLGLSAFGLVLLLNGLVVKLSVVGIILTIIYPFTKRITNMPQMFLGVVWSWSIPMAYAAQTGEVPMEAWWLFAANWFWTVAYDTMYAMVDRDDDLKVGIKSTAILFGKYDRQIIGLFQIAALVCFIAAGWSAERGLLYGLGLLTFVGFSTYQQMLIFGRERAPCFKAFLNNNWAGLALFVGLGADYLI.

The next 7 helical transmembrane spans lie at 21-40, 95-115, 142-162, 167-187, 211-231, 235-255, and 266-286; these read GTLL…AGGM, ILFV…NGLV, FLGV…TGEV, WWLF…YAMV, IIGL…WSAE, LYGL…MLIF, and FLNN…DYLI.

Belongs to the UbiA prenyltransferase family. It depends on Mg(2+) as a cofactor.

It is found in the cell inner membrane. It catalyses the reaction all-trans-octaprenyl diphosphate + 4-hydroxybenzoate = 4-hydroxy-3-(all-trans-octaprenyl)benzoate + diphosphate. It functions in the pathway cofactor biosynthesis; ubiquinone biosynthesis. Functionally, catalyzes the prenylation of para-hydroxybenzoate (PHB) with an all-trans polyprenyl group. Mediates the second step in the final reaction sequence of ubiquinone-8 (UQ-8) biosynthesis, which is the condensation of the polyisoprenoid side chain with PHB, generating the first membrane-bound Q intermediate 3-octaprenyl-4-hydroxybenzoate. The chain is 4-hydroxybenzoate octaprenyltransferase from Shewanella putrefaciens (strain CN-32 / ATCC BAA-453).